Reading from the N-terminus, the 644-residue chain is ATP-dependent zinc metalloprotease FtsH (644 aa).

The Cytoplasmic portion of the chain corresponds to 1-4 (MAKN). The chain crosses the membrane as a helical span at residues 5-25 (LILWLVIAVVLMSVFQSFGPS). The Periplasmic segment spans residues 26 to 98 (ESNGRKVDYS…VGEPPEEPSL (73 aa)). A helical membrane pass occupies residues 99 to 119 (LASIFISWFPMLLLIGVWIFF). Residues 120 to 644 (MRQMQGGGGK…NTMSEQLGDK (525 aa)) are Cytoplasmic-facing. 192 to 199 (GPPGTGKT) provides a ligand contact to ATP. His414 is a binding site for Zn(2+). Glu415 is a catalytic residue. Residues His418 and Asp492 each coordinate Zn(2+). Residues 599-644 (RPPAGWEDPNGTNNSDSNGTPQAPRPVDEPRTPNPGNTMSEQLGDK) form a disordered region. Composition is skewed to polar residues over residues 608-619 (NGTNNSDSNGTP) and 632-644 (NPGNTMSEQLGDK).

In the central section; belongs to the AAA ATPase family. This sequence in the C-terminal section; belongs to the peptidase M41 family. In terms of assembly, homohexamer. The cofactor is Zn(2+).

The protein resides in the cell inner membrane. Functionally, acts as a processive, ATP-dependent zinc metallopeptidase for both cytoplasmic and membrane proteins. Plays a role in the quality control of integral membrane proteins. The sequence is that of ATP-dependent zinc metalloprotease FtsH from Salmonella typhi.